A 414-amino-acid chain; its full sequence is MSSTPSTSDTSSESSTSPATIVLCKVCALSAHGSHFGVLACRACAAFFRRTVVLERQKQYKCKKGKNECPVDTAERYQCRLCRYNKCVDLGMTPENVQFNRESASRTRKRKNENSIAQTNSFKLIPRSDNAFLGKPRTIMDISSLSTKIKSVLNGKTYNLDSAAKKMNSLEAAEYALKKWRSQQKTEDKMEKVGELPVRQLFVIFEKQMVMIAEWLIHNPDFRMLDEEEKYLYFKAVWNMWRRFERFEMSVKMFGNQVLTKRKFAISNEKLMVMDSCIDYSEITDLPNSKVAEMFRLTRSKLFHQLAKPLMELNPSSIEMAYMLTQLSWQIAGKKMQGNVIEIGERVCDNLADDLHSYYQKNEKRSNYAGRLVRLMNIVNAMKKIHLQRKNTMELARIFEMFKVDFSDPDIFDC.

The nuclear receptor DNA-binding region spans 21 to 99; the sequence is IVLCKVCALS…LGMTPENVQF (79 aa). NR C4-type zinc fingers lie at residues 24–44 and 62–82; these read CKVCALSAHGSHFGVLACRAC and CKKGKNECPVDTAERYQCRLC. Residues 162–414 form the NR LBD domain; it reads SAAKKMNSLE…DFSDPDIFDC (253 aa).

Belongs to the nuclear hormone receptor family.

Its subcellular location is the nucleus. In terms of biological role, orphan nuclear receptor. The protein is Nuclear hormone receptor family member nhr-213 (nhr-213) of Caenorhabditis elegans.